A 223-amino-acid polypeptide reads, in one-letter code: Small ribosomal subunit protein uS3 (223 aa).

The region spanning 39–115 (IRKYIEKNLA…RVFINIVEIK (77 aa)) is the KH type-2 domain.

The protein belongs to the universal ribosomal protein uS3 family. In terms of assembly, part of the 30S ribosomal subunit. Forms a tight complex with proteins S10 and S14.

Binds the lower part of the 30S subunit head. Binds mRNA in the 70S ribosome, positioning it for translation. This chain is Small ribosomal subunit protein uS3, found in Leuconostoc mesenteroides subsp. mesenteroides (strain ATCC 8293 / DSM 20343 / BCRC 11652 / CCM 1803 / JCM 6124 / NCDO 523 / NBRC 100496 / NCIMB 8023 / NCTC 12954 / NRRL B-1118 / 37Y).